The chain runs to 510 residues: NAD(P)H-quinone oxidoreductase subunit 2 B, chloroplastic (510 aa).

A run of 13 helical transmembrane segments spans residues 24–44 (LLFFDGSLIFPECILIFGLIL), 57–77 (IPWLYFISSTSLVMSITALLF), 99–119 (IFQFLILLCSTLCIPLSVEYI), 124–144 (MAITEFLLFVLTATIGGMFLC), 149–169 (LITIFVAPECFSLCSYLLSGY), 183–203 (YLLMGGASSSILVHGFSWLYG), 227–247 (PGISIALIFITVGIGFKLSPA), 295–315 (WHLLLEILAILSMILGNLIAI), 323–343 (MLAYSSIGQIGYVIIGIIVGD), 354–374 (YMLFYISMNLGTFACIVLFGL), 395–415 (ALSLALCLLSLGGLPPLAGFF), 418–438 (LYLFWCGWQAGLYFLVLIGLL), and 484–504 (MIVCVIASTIPGISMNPIIAI).

Belongs to the complex I subunit 2 family. NDH is composed of at least 16 different subunits, 5 of which are encoded in the nucleus.

It is found in the plastid. Its subcellular location is the chloroplast thylakoid membrane. The enzyme catalyses a plastoquinone + NADH + (n+1) H(+)(in) = a plastoquinol + NAD(+) + n H(+)(out). It carries out the reaction a plastoquinone + NADPH + (n+1) H(+)(in) = a plastoquinol + NADP(+) + n H(+)(out). NDH shuttles electrons from NAD(P)H:plastoquinone, via FMN and iron-sulfur (Fe-S) centers, to quinones in the photosynthetic chain and possibly in a chloroplast respiratory chain. The immediate electron acceptor for the enzyme in this species is believed to be plastoquinone. Couples the redox reaction to proton translocation, and thus conserves the redox energy in a proton gradient. In Guizotia abyssinica (Niger), this protein is NAD(P)H-quinone oxidoreductase subunit 2 B, chloroplastic.